Here is a 459-residue protein sequence, read N- to C-terminus: Sperm microtubule associated protein 2-like (459 aa).

The interval 1 to 138 (MEEGDFSGSS…QEDGKDDLFP (138 aa)) is disordered. Positions 21–30 (TTTTTETRTT) are enriched in low complexity. A compositionally biased stretch (acidic residues) spans 47–63 (NGDEAEAVGEEGQEEDY). The segment covering 64–73 (EGSKTHKSHE) has biased composition (basic and acidic residues). Residues 77–87 (SFRSHNSSDPP) are compositionally biased toward polar residues. Composition is skewed to basic and acidic residues over residues 91–112 (KASD…KTSD) and 127–136 (ERQEDGKDDL). THEG repeat units follow at residues 172–190 (KKCF…PKKQ), 212–231 (AALK…PRLV), 258–277 (PALV…PNKF), 291–310 (TTRY…AKGT), 327–346 (STLS…PRIK), 367–386 (AALL…SKRV), 403–422 (AATH…PHTR), and 440–459 (SALK…PIVR).

The sequence is that of Sperm microtubule associated protein 2-like from Mus musculus (Mouse).